The chain runs to 160 residues: Large ribosomal subunit protein uL16 (160 aa).

A disordered region spans residues 138 to 160 (INLSSDSSGEGKTGKDSKEEVKK). Positions 149-160 (KTGKDSKEEVKK) are enriched in basic and acidic residues.

The protein belongs to the universal ribosomal protein uL16 family. In terms of assembly, part of the 50S ribosomal subunit.

Its function is as follows. Binds 23S rRNA and is also seen to make contacts with the A and possibly P site tRNAs. The polypeptide is Large ribosomal subunit protein uL16 (Prochlorococcus marinus subsp. pastoris (strain CCMP1986 / NIES-2087 / MED4)).